We begin with the raw amino-acid sequence, 484 residues long: MHEKTVAEIAAALRAGEFSSREVTEAFLARIDALNPVTNAVITPTPEQALAAADAADQRIAAGEAGPLTGVPLVHKDIFCTQGVRTSCGSRMLDNFTAPYDATVVGKLADAGMVMLGKANMDEFAMGSSNETSYYGPVKNPWDLDAVPGGSSGGSAAAVAGRLAPAATGTDTGGSIRQPAALCGLSGLKPTYGRVSRYGMIAFASSLDQGGPMARTCEDLALLLGGMAGFDTRDSTSVDHVVPDYTETLNRSVKGLKIGVPKEFFGEGLDPEVRRVVEAAIEVYREEGAEIREISLPNTRHSVPVYYVIAPAEASSNLSRYDGVRYGYRCEDPSDLEDLYKRSRGEGFGEEVKRRILVGTYALSAGYYDAYYLKAQQVRRLIRDDFTRALQAVDVIMGPTSPTVAFNIGERTDDPVQMYLSDVYTLAVNLAGVPGLSIPAGFAQGRPVGLQIIGDYFDEARLLNVGHKYQQVTDWHRQVPQGFE.

Active-site charge relay system residues include Lys-76 and Ser-151. Residue Ser-175 is the Acyl-ester intermediate of the active site.

It belongs to the amidase family. GatA subfamily. Heterotrimer of A, B and C subunits.

The catalysed reaction is L-glutamyl-tRNA(Gln) + L-glutamine + ATP + H2O = L-glutaminyl-tRNA(Gln) + L-glutamate + ADP + phosphate + H(+). In terms of biological role, allows the formation of correctly charged Gln-tRNA(Gln) through the transamidation of misacylated Glu-tRNA(Gln) in organisms which lack glutaminyl-tRNA synthetase. The reaction takes place in the presence of glutamine and ATP through an activated gamma-phospho-Glu-tRNA(Gln). This chain is Glutamyl-tRNA(Gln) amidotransferase subunit A, found in Alkalilimnicola ehrlichii (strain ATCC BAA-1101 / DSM 17681 / MLHE-1).